We begin with the raw amino-acid sequence, 373 residues long: MPGWSCLVTGAGGFLGQRIIQLLVQEEDLEEIRVLDKVFRPETRKEFFNLETSIKVTVLEGDILDTQYLRRACQGISVVIHTAAIIDVTGVIPRQTILDVNLKGTQNLLEACIQASVPAFIFSSSVDVAGPNSYKEIVLNGHEEECHESTWSDPYPYSKKMAEKAVLAANGSMLKNGGTLQTCALRPMCIYGERSPLISNIIIMALKHKGILRSFGKFNTANPVYVGNVAWAHILAARGLRDPKKSPNIQGEFYYISDDTPHQSFDDISYTLSKEWGFCLDSSWSLPVPLLYWLAFLLETVSFLLSPIYRYIPPFNRHLVTLSGSTFTFSYKKAQRDLGYEPLVSWEEAKQKTSEWIGTLVEQHRETLDTKSQ.

Tyr-155 acts as the Proton acceptor in catalysis. Lys-159 is an NAD(+) binding site. A helical membrane pass occupies residues 288 to 308 (VPLLYWLAFLLETVSFLLSPI).

This sequence belongs to the 3-beta-HSD family. In terms of tissue distribution, liver and kidney.

It localises to the endoplasmic reticulum membrane. Its subcellular location is the mitochondrion membrane. It catalyses the reaction a 3beta-hydroxy-Delta(5)-steroid + NAD(+) = a 3-oxo-Delta(5)-steroid + NADH + H(+). It carries out the reaction a 3-oxo-Delta(5)-steroid = a 3-oxo-Delta(4)-steroid. The catalysed reaction is pregnenolone + NAD(+) = pregn-5-ene-3,20-dione + NADH + H(+). The enzyme catalyses pregn-5-ene-3,20-dione = progesterone. It catalyses the reaction 3beta-hydroxyandrost-5-en-17-one + NAD(+) = androst-5-ene-3,17-dione + NADH + H(+). It carries out the reaction androst-5-ene-3,17-dione = androst-4-ene-3,17-dione. It participates in lipid metabolism; steroid biosynthesis. In terms of biological role, 3-beta-HSD is a bifunctional enzyme, that catalyzes the oxidative conversion of Delta(5)-ene-3-beta-hydroxy steroid, and the oxidative conversion of ketosteroids. The 3-beta-HSD enzymatic system plays a crucial role in the biosynthesis of all classes of hormonal steroids. The sequence is that of 3 beta-hydroxysteroid dehydrogenase/Delta 5--&gt;4-isomerase type 2 from Mus musculus (Mouse).